The primary structure comprises 385 residues: MKDVILIANAGSSSLKISIFEIQNKQVKDKIYNIFLEKNDNKILCYINKKQESATDIKDDAIEMMIDLFEDWWKKQENLNLIATGHRIVHGGKNFNKPVIVNEKVSEDLRVLIPLNPLHQPYNLQVLDLFLQKYKEIVHIACFDTSFHFTNPPITKAFGLPKKYYAKGIIRYGFHGLSYKYVSSHFKEMTKEDLPIKTIIAHLGSGSSLCAIKNGLSLTSSMGFSVLDGVMMGTRTGNIDPGIVLYLIDHEKMTTKEITELLYKKSGLLGISGESSDIRTLLASNSPDAKFAIDLFVYRIVLEIGKLTAALEGIDGLIFTAGVGQNSAVIREMISAKLSWLGIKIDDTKNQKNEHLISTESSKVKVFAVPTNEELIIAEEVIKFL.

N9 serves as a coordination point for Mg(2+). K16 contacts ATP. Position 87 (R87) interacts with substrate. Residue D144 is the Proton donor/acceptor of the active site. Residues 202–206 and 277–279 contribute to the ATP site; these read HLGSG and DIR. E373 is a Mg(2+) binding site.

This sequence belongs to the acetokinase family. As to quaternary structure, homodimer. Requires Mg(2+) as cofactor. It depends on Mn(2+) as a cofactor.

The protein resides in the cytoplasm. The enzyme catalyses acetate + ATP = acetyl phosphate + ADP. Its pathway is metabolic intermediate biosynthesis; acetyl-CoA biosynthesis; acetyl-CoA from acetate: step 1/2. Its function is as follows. Catalyzes the formation of acetyl phosphate from acetate and ATP. Can also catalyze the reverse reaction. This Rickettsia akari (strain Hartford) protein is Acetate kinase.